The following is a 241-amino-acid chain: Chaperone protein FimC (241 aa).

The N-terminal stretch at 1–36 (MSNKNVNVRKSQEITFCLLAGILMFMAMVVAGRAEA) is a signal peptide.

Belongs to the periplasmic pilus chaperone family.

It is found in the periplasm. In terms of biological role, required for the biogenesis of type 1 fimbriae. Binds and interact with FimH. This Escherichia coli O6:H1 (strain CFT073 / ATCC 700928 / UPEC) protein is Chaperone protein FimC (fimC).